Reading from the N-terminus, the 316-residue chain is tRNA uridine(34) hydroxylase (316 aa).

One can recognise a Rhodanese domain in the interval 136–230 (ADENTVVVDK…YLEEVPREQS (95 aa)). Catalysis depends on Cys190, which acts as the Cysteine persulfide intermediate.

It belongs to the TrhO family.

It carries out the reaction uridine(34) in tRNA + AH2 + O2 = 5-hydroxyuridine(34) in tRNA + A + H2O. Catalyzes oxygen-dependent 5-hydroxyuridine (ho5U) modification at position 34 in tRNAs. In Brucella abortus (strain 2308), this protein is tRNA uridine(34) hydroxylase.